Consider the following 384-residue polypeptide: Omega-6 fatty acid desaturase, endoplasmic reticulum (384 aa).

The disordered stretch occupies residues 1–23 (MGAGGRMQVSPSPKKSETDTLKR). Basic and acidic residues predominate over residues 14–23 (KKSETDTLKR). Transmembrane regions (helical) follow at residues 56–76 (LIWD…YFPL) and 84–104 (VAWP…WVIA). The short motif at 105–109 (HECGH) is the Histidine box-1 element. A helical membrane pass occupies residues 117-137 (WLDDTVGLIFHSFLLVPYFSW). The short motif at 141 to 145 (HRRHH) is the Histidine box-2 element. 3 consecutive transmembrane segments (helical) span residues 180–200 (VMLT…NVSG), 226–246 (IYVS…YAAA), and 253–273 (VCLY…ITYL). Residues 316–320 (HVAHH) carry the Histidine box-3 motif.

Belongs to the fatty acid desaturase type 1 family.

It is found in the endoplasmic reticulum membrane. Its pathway is lipid metabolism; polyunsaturated fatty acid biosynthesis. In terms of biological role, ER (microsomal) omega-6 fatty acid desaturase introduces the second double bond in the biosynthesis of 18:3 fatty acids, important constituents of plant membranes. It is thought to use cytochrome b5 as an electron donor and to act on fatty acids esterified to phosphatidylcholine and, possibly, other phospholipids. This Brassica juncea (Indian mustard) protein is Omega-6 fatty acid desaturase, endoplasmic reticulum.